A 117-amino-acid chain; its full sequence is Structural toxin peptide sea anemone type 9a (117 aa).

The N-terminal stretch at 1-23 is a signal peptide; sequence MKTIIAIFSLAAMIVLVRPTPLE. 3 consecutive repeat copies span residues 28 to 56, 57 to 88, and 89 to 117. Positions 29–117 are 3 X approximate tandem repeats; sequence RSIINVPCKK…GKCRKIHGCS (89 aa).

Post-translationally, contains 6 disulfide bonds. Expressed outside of acontia.

Its subcellular location is the secreted. It is found in the nematocyst. Functionally, putative neurotoxin. The polypeptide is Structural toxin peptide sea anemone type 9a (Calliactis polypus (Hermit crab anemone)).